Consider the following 515-residue polypeptide: Signal transduction histidine-protein kinase/phosphatase MprB (515 aa).

At 1–24 (MTLPPQPSRLKPPRNTSSLSLRWR) the chain is on the cytoplasmic side. A helical membrane pass occupies residues 25–45 (VMLLAMSMVAMVVVLMSVAVY). At 46 to 165 (AVVSRALYDD…TGQVLGRLGT (120 aa)) the chain is on the extracellular side. Residues 166–186 (VLLIVGGVGVAVAAIAGGMVA) form a helical membrane-spanning segment. One can recognise an HAMP domain in the interval 187 to 239 (RAGLRPVGRLTQAAERVARTDDLRPIPVFGSDELARLTEAFNMMLRALTESRE). The Cytoplasmic portion of the chain corresponds to 187-515 (RAGLRPVGRL…GKSRSASKEL (329 aa)). A Histidine kinase domain is found at 247–467 (DAGHELRTPL…SFYVMLPGRP (221 aa)). H250 is subject to Phosphohistidine; by autocatalysis. Residues 468–515 (LTPGGNGTAPVPAAQFDPDMRSAGSRADRRVIKNTETNGKSRSASKEL) form a disordered region.

Mg(2+) is required as a cofactor. Mn(2+) serves as cofactor. In terms of processing, autophosphorylated.

The protein resides in the cell membrane. The enzyme catalyses ATP + protein L-histidine = ADP + protein N-phospho-L-histidine.. Its function is as follows. Member of the two-component regulatory system MprB/MprA which contributes to maintaining a balance among several systems involved in stress resistance and is required for establishment and maintenance of persistent infection in the host. In response to environmental signals MprB acts both as a membrane-associated protein kinase that undergoes autophosphorylation and subsequently transfers the phosphate to MprA, and a protein phosphatase that dephosphorylates phospho-MprA. The sequence is that of Signal transduction histidine-protein kinase/phosphatase MprB (mprB) from Mycobacterium sp. (strain JLS).